The primary structure comprises 190 residues: Holliday junction branch migration complex subunit RuvA (190 aa).

The domain I stretch occupies residues 1 to 64; that stretch reads MIGRITGTLI…EDAQLLYGFG (64 aa). The interval 65-137 is domain II; the sequence is SSAERSTFRE…MRGKLGADIG (73 aa). The flexible linker stretch occupies residues 137–141; sequence GATPH. Residues 142 to 190 are domain III; the sequence is AASGHQSDILNALLALGYSDKESQAALKKLPDGVDVSEGIRLALKALVR.

Belongs to the RuvA family. Homotetramer. Forms an RuvA(8)-RuvB(12)-Holliday junction (HJ) complex. HJ DNA is sandwiched between 2 RuvA tetramers; dsDNA enters through RuvA and exits via RuvB. An RuvB hexamer assembles on each DNA strand where it exits the tetramer. Each RuvB hexamer is contacted by two RuvA subunits (via domain III) on 2 adjacent RuvB subunits; this complex drives branch migration. In the full resolvosome a probable DNA-RuvA(4)-RuvB(12)-RuvC(2) complex forms which resolves the HJ.

It localises to the cytoplasm. Its function is as follows. The RuvA-RuvB-RuvC complex processes Holliday junction (HJ) DNA during genetic recombination and DNA repair, while the RuvA-RuvB complex plays an important role in the rescue of blocked DNA replication forks via replication fork reversal (RFR). RuvA specifically binds to HJ cruciform DNA, conferring on it an open structure. The RuvB hexamer acts as an ATP-dependent pump, pulling dsDNA into and through the RuvAB complex. HJ branch migration allows RuvC to scan DNA until it finds its consensus sequence, where it cleaves and resolves the cruciform DNA. This chain is Holliday junction branch migration complex subunit RuvA, found in Bordetella pertussis (strain Tohama I / ATCC BAA-589 / NCTC 13251).